The chain runs to 147 residues: Large ribosomal subunit protein bL9 (147 aa).

Belongs to the bacterial ribosomal protein bL9 family.

Binds to the 23S rRNA. In Bacteroides thetaiotaomicron (strain ATCC 29148 / DSM 2079 / JCM 5827 / CCUG 10774 / NCTC 10582 / VPI-5482 / E50), this protein is Large ribosomal subunit protein bL9.